Reading from the N-terminus, the 262-residue chain is Short-chain Z-isoprenyl diphosphate synthase (262 aa).

Asp40 is a catalytic residue. Mg(2+) is bound at residue Asp40. Substrate is bound by residues 41-44, Trp45, and 86-88; these read GNRR and STE. Asn89 acts as the Proton acceptor in catalysis. Residues Arg92, Arg211, and 217-219 contribute to the substrate site; that span reads RLS. Mg(2+) is bound at residue Glu230.

The protein belongs to the UPP synthase family. Z-FPP synthase subfamily. Requires Mg(2+) as cofactor.

The catalysed reaction is isopentenyl diphosphate + (2E)-geranyl diphosphate = (2Z,6E)-farnesyl diphosphate + diphosphate. It participates in phospholipid metabolism; decaprenyl phosphate biosynthesis. In terms of biological role, generates Z-farnesyl diphosphate (Z-FPP) from isopentenyl pyrophosphate (IPP). Z-FPP is the precursor of decaprenyl diphosphate, which has a central role in the biosynthesis of the mycobacterial cell wall. The protein is Short-chain Z-isoprenyl diphosphate synthase of Mycobacterium bovis (strain ATCC BAA-935 / AF2122/97).